The primary structure comprises 2540 residues: Probable JmjC domain-containing histone demethylation protein 2C (2540 aa).

The segment covering 278-309 has biased composition (polar residues); it reads TRAQANSPRPAMNSQAAVPKQNTHQQQQQRSI. Positions 278–478 are disordered; that stretch reads TRAQANSPRP…TVSDHNSNDL (201 aa). A phosphoserine mark is found at Ser317 and Ser320. Over residues 323–342 the composition is skewed to basic and acidic residues; the sequence is DEEKMKEEKYDYISRGENPK. Basic residues predominate over residues 343 to 353; it reads GKNKHLMNKRR. Residues 354–371 show a composition bias toward basic and acidic residues; sequence KPEEDEKKLNMKRLRTDN. 2 positions are modified to phosphoserine: Ser373 and Ser376. The span at 373-382 shows a compositional bias: low complexity; it reads SDFSESSDSE. Basic and acidic residues-rich tracts occupy residues 383–403, 410–427, and 438–452; these read NSNKRIIDNSSEQKPENELKN, NGEEGKPHNNEKAGEETL, and QEDKKHEEAEKRKSV. A compositionally biased stretch (polar residues) spans 464-478; the sequence is SSEQSTVSDHNSNDL. Phosphoserine occurs at positions 475 and 501. Thr505 carries the phosphothreonine modification. 7 positions are modified to phosphoserine: Ser601, Ser617, Ser638, Ser639, Ser641, Ser652, and Ser943. A disordered region spans residues 631–656; that stretch reads VDTHKIKSSPSPEVVKPKITHSPDSV. Disordered stretches follow at residues 1242-1263 and 1614-1692; these read GKVQESQKPPTLIPEPKDSQAN and NRRK…NSNT. Positions 1643–1652 are enriched in basic residues; the sequence is KRQPKPTYKK. Residues 1653 to 1669 are compositionally biased toward basic and acidic residues; the sequence is KQNDLQKRKGEIEEDLK. The C6-type zinc-finger motif lies at 1846–1871; sequence CDACEATLFNIHWVCQKCGFVVCLDC. Over residues 1971–1991 the composition is skewed to polar residues; it reads PESQQQNTPPKSEKNGGSSPE. The tract at residues 1971–2064 is disordered; that stretch reads PESQQQNTPP…LVSQNNEQGS (94 aa). Position 1989 is a phosphoserine (Ser1989). A compositionally biased stretch (basic and acidic residues) spans 2016-2043; sequence AEQKAREEKKENKELTLENQIKEEREQD. Over residues 2045-2064 the composition is skewed to polar residues; that stretch reads SESPNGRTSPLVSQNNEQGS. Residues 2066–2070 carry the LXXLL motif motif; the sequence is LRDLL. Residues Lys2132 and Lys2136 each participate in a glycyl lysine isopeptide (Lys-Gly) (interchain with G-Cter in SUMO2) cross-link. One can recognise a JmjC domain in the interval 2274-2498; sequence MPARYEDLLK…ESFHLTQELR (225 aa). The Fe cation site is built by His2336, Glu2338, and His2466.

The protein belongs to the JHDM2 histone demethylase family. As to quaternary structure, interacts specifically with the ligand-binding domain of the thyroid receptor (TR). Requires the presence of thyroid hormone for its interaction. It depends on Fe(2+) as a cofactor.

The protein resides in the nucleus. Probable histone demethylase that specifically demethylates 'Lys-9' of histone H3, thereby playing a central role in histone code. Demethylation of Lys residue generates formaldehyde and succinate. May be involved in hormone-dependent transcriptional activation, by participating in recruitment to androgen-receptor target genes. The sequence is that of Probable JmjC domain-containing histone demethylation protein 2C (JMJD1C) from Homo sapiens (Human).